The primary structure comprises 59 residues: UPF0434 protein Shew185_1670 (59 aa).

The protein belongs to the UPF0434 family.

This Shewanella baltica (strain OS185) protein is UPF0434 protein Shew185_1670.